Consider the following 306-residue polypeptide: Homeobox protein HMX3 (306 aa).

The tract at residues 95–181 is disordered; that stretch reads HTPRTEVPDK…DKKPCRKKKT (87 aa). 2 stretches are compositionally biased toward basic and acidic residues: residues 117 to 143 and 153 to 174; these read GERD…KSPE and EEGK…PDKK. Positions 178-237 form a DNA-binding region, homeobox; it reads KKKTRTVFSRSQVFQLESTFDMKRYLSSSERAGLAASLHLTETQVKIWFQNRRNKWKRQL.

It belongs to the HMX homeobox family.

The protein localises to the nucleus. Its function is as follows. Transcription factor involved in specification of neuronal cell types and which is required for inner ear and hypothalamus development. Binds to the 5'-CAAGTG-3' core sequence. May act as a stage-specific inhibitor of anf1 in the anterior neural plate during the development. This is Homeobox protein HMX3 (hmx3) from Xenopus tropicalis (Western clawed frog).